The following is a 112-amino-acid chain: Ig kappa chain V-II region 2S1.3 (112 aa).

The segment at 1 to 23 is framework-1; that stretch reads DIVMTQAAFSNPVTLGTSASFSC. A disulfide bridge connects residues Cys-23 and Cys-93. Residues 24-39 form a complementarity-determining-1 region; the sequence is RSSKSLQQSKGITYLY. Positions 40-54 are framework-2; the sequence is WYLQKPGQSPQLLIY. The complementarity-determining-2 stretch occupies residues 55–61; sequence QMSNLAS. A framework-3 region spans residues 62 to 93; sequence GVPDRFSGSGSGTDFTLRISRVEAEDVGVYYC. A complementarity-determining-3 region spans residues 94–102; that stretch reads ANLQELPYT. A framework-4 region spans residues 103 to 112; the sequence is FGGGTKLEIK.

The sequence is that of Ig kappa chain V-II region 2S1.3 from Mus musculus (Mouse).